The primary structure comprises 104 residues: MKKILIPMLALGGALAMQPALAQDGEALFKSKPCAACHSVDTKMVGPALKEVAAKNAGVEGAADTLALHIKNGSQGVWGPIPMPPNPVTEEEAKILAEWVLSLK.

The first 22 residues, 1–22 (MKKILIPMLALGGALAMQPALA), serve as a signal peptide directing secretion. Heme c contacts are provided by cysteine 34, cysteine 37, histidine 38, and methionine 83.

Binds 1 heme c group covalently per subunit.

It localises to the periplasm. In terms of biological role, electron donor for cytochrome cd1 in nitrite and nitrate respiration. This chain is Cytochrome c-551 (nirM), found in Stutzerimonas stutzeri (Pseudomonas stutzeri).